We begin with the raw amino-acid sequence, 185 residues long: Threonylcarbamoyl-AMP synthase (185 aa).

Residues 5–185 (ADRIADAVAA…DLQSGETLRR (181 aa)) enclose the YrdC-like domain.

This sequence belongs to the SUA5 family. TsaC subfamily.

It localises to the cytoplasm. The enzyme catalyses L-threonine + hydrogencarbonate + ATP = L-threonylcarbamoyladenylate + diphosphate + H2O. Required for the formation of a threonylcarbamoyl group on adenosine at position 37 (t(6)A37) in tRNAs that read codons beginning with adenine. Catalyzes the conversion of L-threonine, HCO(3)(-)/CO(2) and ATP to give threonylcarbamoyl-AMP (TC-AMP) as the acyladenylate intermediate, with the release of diphosphate. This chain is Threonylcarbamoyl-AMP synthase, found in Chromohalobacter salexigens (strain ATCC BAA-138 / DSM 3043 / CIP 106854 / NCIMB 13768 / 1H11).